Reading from the N-terminus, the 143-residue chain is Small ribosomal subunit protein uS12 (143 aa).

The residue at position 62 (proline 62) is a Hydroxyproline.

Belongs to the universal ribosomal protein uS12 family. As to quaternary structure, component of the 40S small ribosomal subunit.

The protein resides in the cytoplasm. It is found in the cytosol. The protein localises to the rough endoplasmic reticulum. This chain is Small ribosomal subunit protein uS12 (rps-23), found in Caenorhabditis elegans.